The primary structure comprises 609 residues: Probable translation initiation factor IF-2 (609 aa).

The tr-type G domain maps to 12-230 (LRQPIVAVLG…VLAGLAQRYM (219 aa)). Residues 21 to 28 (GHVDHGKT) are G1. 21–28 (GHVDHGKT) lines the GTP pocket. Positions 46 to 50 (QITQH) are G2. The G3 stretch occupies residues 86–89 (DTPG). GTP contacts are provided by residues 86–90 (DTPGH) and 140–143 (NKID). The tract at residues 140-143 (NKID) is G4. Residues 208–210 (SAK) form a G5 region.

Belongs to the TRAFAC class translation factor GTPase superfamily. Classic translation factor GTPase family. IF-2 subfamily.

Function in general translation initiation by promoting the binding of the formylmethionine-tRNA to ribosomes. Seems to function along with eIF-2. The sequence is that of Probable translation initiation factor IF-2 from Ignicoccus hospitalis (strain KIN4/I / DSM 18386 / JCM 14125).